We begin with the raw amino-acid sequence, 206 residues long: Large ribosomal subunit protein uL4 (206 aa).

Basic and acidic residues predominate over residues 48–59 (THDTKTRSEVRG). Positions 48 to 77 (THDTKTRSEVRGGGRKPWRQKGTGRARHGS) are disordered. Positions 60–77 (GGRKPWRQKGTGRARHGS) are enriched in basic residues.

This sequence belongs to the universal ribosomal protein uL4 family. Part of the 50S ribosomal subunit.

In terms of biological role, one of the primary rRNA binding proteins, this protein initially binds near the 5'-end of the 23S rRNA. It is important during the early stages of 50S assembly. It makes multiple contacts with different domains of the 23S rRNA in the assembled 50S subunit and ribosome. Functionally, forms part of the polypeptide exit tunnel. This chain is Large ribosomal subunit protein uL4, found in Pelotomaculum thermopropionicum (strain DSM 13744 / JCM 10971 / SI).